Reading from the N-terminus, the 642-residue chain is Threonine--tRNA ligase (642 aa).

In terms of domain architecture, TGS spans 1 to 61; sequence MPVITLPDGS…ENDAQLSIIT (61 aa). The segment at 243–534 is catalytic; that stretch reads DHRKIGKQLD…LTEEFAGFFP (292 aa). The Zn(2+) site is built by Cys-334, His-385, and His-511.

It belongs to the class-II aminoacyl-tRNA synthetase family. As to quaternary structure, homodimer. Zn(2+) serves as cofactor.

It localises to the cytoplasm. The catalysed reaction is tRNA(Thr) + L-threonine + ATP = L-threonyl-tRNA(Thr) + AMP + diphosphate + H(+). In terms of biological role, catalyzes the attachment of threonine to tRNA(Thr) in a two-step reaction: L-threonine is first activated by ATP to form Thr-AMP and then transferred to the acceptor end of tRNA(Thr). Also edits incorrectly charged L-seryl-tRNA(Thr). The sequence is that of Threonine--tRNA ligase from Enterobacter sp. (strain 638).